A 258-amino-acid polypeptide reads, in one-letter code: Probable F-box protein At2g29610 (258 aa).

The interval 1–25 is disordered; sequence MVELSEIPGDPNGADPNNNPQEEDE. Low complexity predominate over residues 8–20; it reads PGDPNGADPNNNP. One can recognise an F-box domain in the interval 28-74; the sequence is LPILLQLPEELIERIIAHFPQCYSPSPILVCETFRQVINSDHFYYVT.

The polypeptide is Probable F-box protein At2g29610 (Arabidopsis thaliana (Mouse-ear cress)).